A 419-amino-acid chain; its full sequence is Mitochondrial inner membrane magnesium transporter MRS2 (419 aa).

The next 2 helical transmembrane spans lie at 297–317 (VTIV…YGMN) and 328–348 (GMVL…WFNL). The YGMN motif lies at 314–317 (YGMN).

Belongs to the CorA metal ion transporter (MIT) (TC 1.A.35) family. In terms of assembly, homopentamer. Forms homooligomers. Interacts with MFM1.

It localises to the mitochondrion inner membrane. High-conductance magnesium-selective channel that mediates the influx of magnesium into the mitochondrial matrix. Essential for the splicing of mRNA group II introns in mitochondria by affecting mitochondrial magnesium concentrations, which are critical for group II intron splicing. It also suppresses a variety of mitochondrial intron mutations and its absence may disturb the assembly of mitochondrial membrane complexes. In Yarrowia lipolytica (strain CLIB 122 / E 150) (Yeast), this protein is Mitochondrial inner membrane magnesium transporter MRS2 (MRS2).